Consider the following 260-residue polypeptide: UPF0246 protein Mmwyl1_3597 (260 aa).

It belongs to the UPF0246 family.

The protein is UPF0246 protein Mmwyl1_3597 of Marinomonas sp. (strain MWYL1).